The following is a 100-amino-acid chain: Large ribosomal subunit protein uL23 (100 aa).

It belongs to the universal ribosomal protein uL23 family. Part of the 50S ribosomal subunit. Contacts protein L29, and trigger factor when it is bound to the ribosome.

In terms of biological role, one of the early assembly proteins it binds 23S rRNA. One of the proteins that surrounds the polypeptide exit tunnel on the outside of the ribosome. Forms the main docking site for trigger factor binding to the ribosome. The polypeptide is Large ribosomal subunit protein uL23 (Vibrio atlanticus (strain LGP32) (Vibrio splendidus (strain Mel32))).